Consider the following 293-residue polypeptide: Glycine--tRNA ligase alpha subunit (293 aa).

Belongs to the class-II aminoacyl-tRNA synthetase family. Tetramer of two alpha and two beta subunits.

Its subcellular location is the cytoplasm. The catalysed reaction is tRNA(Gly) + glycine + ATP = glycyl-tRNA(Gly) + AMP + diphosphate. The sequence is that of Glycine--tRNA ligase alpha subunit from Sulfurimonas denitrificans (strain ATCC 33889 / DSM 1251) (Thiomicrospira denitrificans (strain ATCC 33889 / DSM 1251)).